Reading from the N-terminus, the 769-residue chain is Major inner protein P1 (769 aa).

Homodimer. Associates with the polymerase complex.

The protein localises to the virion. Its function is as follows. P1 is the major inner capsid (core) protein of the polyhedral procapsid, which is responsible for genomic replication and transcription. Forms a dodecahedral shell from 60 asymmetric dimers. Binds to RNA and may be involved in genomic packaging. The chain is Major inner protein P1 (P1) from Pseudomonas phage phi6 (Bacteriophage phi-6).